We begin with the raw amino-acid sequence, 257 residues long: Thioesterase frbE (257 aa).

It belongs to the AMT4 thioesterase family.

It functions in the pathway antifungal biosynthesis. Its function is as follows. Thioesterase; part of the gene cluster that mediates the biosynthesis of the antifungal antibiotic FR901469, an inhibitor of beta-1,3-glucansynthase, exerting antifungal activity against the pathogenes Candida albicans and Aspergillus fumigatus. FR901469 is a cyclic depsipeptide containing 12 amino acid residues and a fatty acid chain. The NRPS frbI contains 12 modules responsible for the formation of the depsipeptide backbone which is denoted as Acyl-Thr-Ala-Tyr-Val-4OHPro-Thr-Thr-3OHPro-threo3OHGln-Gly-Thr-Orn-OH (C71H116N14O23). The PKS frbB is probably involved in the production of the hydrocarbon chain, and the acyl-CoA ligase frbC might be involved in the transport of the chain to the peptide ptoduct of frbI. Because FR901469 contains 3 hydroxylated amino acid residues, the 3 oxygenases frbA, frbH, and frbJ might be participating in amino acid hydroxylation. As no thioesterase domains were detected in frbI or frbB, the thioesterases frbD and frbE may instead release and cyclize the products of the NRPS and PKS, respectively. The chain is Thioesterase frbE from Dothideomycetidae sp. (strain 11243) (Fungal sp. (strain No.11243)).